The primary structure comprises 411 residues: Serpin A3-5 (411 aa).

The N-terminal stretch at 1-24 (MRAERTSFLLALGLLMAGIRSVHC) is a signal peptide. Asn-100, Asn-180, Asn-230, Asn-264, and Asn-318 each carry an N-linked (GlcNAc...) asparagine glycan.

Belongs to the serpin family. As to quaternary structure, homodimer.

The protein resides in the cytoplasmic vesicle. It is found in the secretory vesicle. The protein localises to the chromaffin granule. It localises to the secreted. Functionally, serine protease inhibitor. This is Serpin A3-5 from Bos taurus (Bovine).